Reading from the N-terminus, the 662-residue chain is UvrABC system protein B (662 aa).

The Helicase ATP-binding domain maps to 31 to 188; sequence DNIEGGEKAQ…NDLVDIQFER (158 aa). ATP is bound at residue 44-51; it reads GATGTGKT. Positions 97–120 match the Beta-hairpin motif; the sequence is YYDYYQPEAYVPSSDTYIEKDSSV. The 167-residue stretch at 435–601 folds into the Helicase C-terminal domain; sequence QIDDLLGEIN…TIKKEIRDLI (167 aa). The UVR domain maps to 626-661; sequence KDMIKKLEGQMQEAAGLLDFELAAQIRDMILEIKAM.

It belongs to the UvrB family. Forms a heterotetramer with UvrA during the search for lesions. Interacts with UvrC in an incision complex.

Its subcellular location is the cytoplasm. Functionally, the UvrABC repair system catalyzes the recognition and processing of DNA lesions. A damage recognition complex composed of 2 UvrA and 2 UvrB subunits scans DNA for abnormalities. Upon binding of the UvrA(2)B(2) complex to a putative damaged site, the DNA wraps around one UvrB monomer. DNA wrap is dependent on ATP binding by UvrB and probably causes local melting of the DNA helix, facilitating insertion of UvrB beta-hairpin between the DNA strands. Then UvrB probes one DNA strand for the presence of a lesion. If a lesion is found the UvrA subunits dissociate and the UvrB-DNA preincision complex is formed. This complex is subsequently bound by UvrC and the second UvrB is released. If no lesion is found, the DNA wraps around the other UvrB subunit that will check the other stand for damage. This is UvrABC system protein B from Streptococcus sanguinis (strain SK36).